A 950-amino-acid polypeptide reads, in one-letter code: Leucine--tRNA ligase (950 aa).

The short motif at 72 to 83 is the 'HIGH' region element; the sequence is PYPSGEGLHVGH. A 'KMSKS' region motif is present at residues 722–726; that stretch reads KIGKS. Position 725 (lysine 725) interacts with ATP.

Belongs to the class-I aminoacyl-tRNA synthetase family.

Its subcellular location is the cytoplasm. The enzyme catalyses tRNA(Leu) + L-leucine + ATP = L-leucyl-tRNA(Leu) + AMP + diphosphate. The polypeptide is Leucine--tRNA ligase (Mycobacterium sp. (strain JLS)).